The primary structure comprises 91 residues: Potassium channel toxin Meg-beta-KTx1 (91 aa).

A signal peptide spans 1-19 (MQRNLVVLLFLGMVALSSC). The propeptide occupies 20 to 27 (GLREKHFQ). The 38-residue stretch at 54–91 (QFGCPAYQGYCDDHCQDIKKQEGFCHGFKCKCGIPMGF) folds into the BetaSPN-type CS-alpha/beta domain. Cystine bridges form between Cys57–Cys78, Cys64–Cys83, and Cys68–Cys85.

Belongs to the long chain scorpion toxin family. Class 1 subfamily. As to expression, expressed by the venom gland.

It localises to the secreted. In terms of biological role, inhibits voltage-gated potassium channel. The chain is Potassium channel toxin Meg-beta-KTx1 from Mesobuthus gibbosus (Mediterranean checkered scorpion).